We begin with the raw amino-acid sequence, 97 residues long: Large ribosomal subunit protein uL23 (97 aa).

Belongs to the universal ribosomal protein uL23 family. Part of the 50S ribosomal subunit. Contacts protein L29, and trigger factor when it is bound to the ribosome.

Its function is as follows. One of the early assembly proteins it binds 23S rRNA. One of the proteins that surrounds the polypeptide exit tunnel on the outside of the ribosome. Forms the main docking site for trigger factor binding to the ribosome. The sequence is that of Large ribosomal subunit protein uL23 from Allorhizobium ampelinum (strain ATCC BAA-846 / DSM 112012 / S4) (Agrobacterium vitis (strain S4)).